A 687-amino-acid chain; its full sequence is Chloride channel protein ClC-Ka (687 aa).

5 helical membrane passes run 52 to 72 (FLVALGVLMALISYAMNFAIG), 94 to 114 (LSWTVYPVALLSFSSGFSQSI), 161 to 181 (IFLGKVGPFVHLSVMISAYLG), 204 to 224 (AAAVGVATVFAAPFSGVLFSI), and 236 to 256 (YWRGFFAATCGAFMFRLLGVF). Residues Glu-259, Glu-261, Asp-278, and Glu-281 each coordinate Ca(2+). Transmembrane regions (helical) follow at residues 282 to 302 (IFFFVALGFICGVLSCAYLFC), 325 to 345 (PSYAALVALVLASITYPPGVG), 396 to 416 (FTIFGTLAFFLVMKFWMLILA), 417 to 437 (TTIPMPAGYFMPIFIIGAAIG), 458 to 478 (VNPIMPGGYALAGAAAFSGAV), and 486 to 506 (LLAFELTGQIVHALPVLMAVL). Topologically, residues 507 to 687 (AANAISQNCQ…STLINPPAPK (181 aa)) are cytoplasmic. CBS domains follow at residues 551–609 (MNCN…QPAS) and 626–687 (CPTQ…PAPK).

This sequence belongs to the chloride channel (TC 2.A.49) family. CLCNKA subfamily. As to quaternary structure, homodimer. Interacts with BSND. As to expression, expressed predominantly in the kidney. Expressed strongly in the cortical thick ascending limb and the distal convoluted tubule, with minor expression in the S3 segment of the proximal tubule and the cortical collecting tubule.

Its subcellular location is the basolateral cell membrane. It catalyses the reaction chloride(in) = chloride(out). It carries out the reaction bromide(in) = bromide(out). The catalysed reaction is nitrate(in) = nitrate(out). The enzyme catalyses iodide(out) = iodide(in). Its activity is regulated as follows. Activated by extracellular Ca(2+) and inhibited by extracellular acidic pH. Its function is as follows. Anion-selective channel permeable to small monovalent anions with ion selectivity for chloride &gt; bromide &gt; nitrate &gt; iodide. Forms a homodimeric channel where each subunit has its own ion conduction pathway. Conducts double-barreled currents controlled by two types of gates, two fast gates that control each subunit independently and a slow common gate that opens and shuts off both subunits simultaneously. Assembles with the regulatory subunit BSND/Barttin for sorting at the basolateral plasma membrane domain. CLCNKA:BSND channels are activated upon membrane hyperpolarization mostly controlled by fast gating. Mediates transepithelial chloride transport from the lumen to interstitial compartment along the thin ascending limb of Henle's loop, contributing to generation of hypertonic medullary interstitium as a countercurrent system to achieve urine concentration. Conducts chloride currents in the stria vascularis of the inner ear to establish the endocochlear potential necessary for normal hearing. The polypeptide is Chloride channel protein ClC-Ka (Rattus norvegicus (Rat)).